A 758-amino-acid polypeptide reads, in one-letter code: Vitamin K-dependent gamma-carboxylase (758 aa).

The tract at residues 1–21 (MAVSARSARTSPGSDKVQKDK) is disordered. A2 bears the N-acetylalanine mark. The Cytoplasmic segment spans residues 2 to 60 (AVSARSARTSPGSDKVQKDKAELISGPRQDSLMGKLLGFEWTDLSSWRRLVTLLNRPTD). The helical transmembrane segment at 61 to 81 (PASLAVFRFLFGFLMVLDIPQ) threads the bilayer. Topologically, residues 82–113 (ERGLSSLDRKYLDGLDVCRFPLLDALRPLPLD) are lumenal. The cysteines at positions 99 and 450 are disulfide-linked. The chain crosses the membrane as a helical span at residues 114–134 (WMYLVYTIMFLGALGMMLGLC). The Cytoplasmic segment spans residues 135–136 (YR). A helical membrane pass occupies residues 137–157 (ISCVLFLLPYWYVFLLDKTSW). The Lumenal segment spans residues 158 to 292 (NNHSYLYGLL…VSYFHCMNSQ (135 aa)). A helical membrane pass occupies residues 293 to 313 (LFSIGMFSYVMLASSPLFCSP). At 314–361 (EWPRKLVSYCPQRLQELLPLKAAPQPSVSCVYKRSRGKSGQKPGLRHQ) the chain is on the cytoplasmic side. The chain crosses the membrane as a helical span at residues 362 to 382 (LGAAFTLLYLLEQLFLPYSHF). At 383–758 (LTQGYNNWTN…SNPDPVHSEF (376 aa)) the chain is on the lumenal side. A disordered region spans residues 732 to 758 (GELSPSNMDSSHSNPPESNPDPVHSEF). Residues 735-747 (SPSNMDSSHSNPP) show a composition bias toward polar residues.

Belongs to the vitamin K-dependent gamma-carboxylase family. Monomer. May interact with CALU.

It localises to the endoplasmic reticulum membrane. It carries out the reaction 4-carboxy-L-glutamyl-[protein] + 2,3-epoxyphylloquinone + H2O + H(+) = phylloquinol + L-glutamyl-[protein] + CO2 + O2. Its function is as follows. Mediates the vitamin K-dependent carboxylation of glutamate residues to calcium-binding gamma-carboxyglutamate (Gla) residues with the concomitant conversion of the reduced hydroquinone form of vitamin K to vitamin K epoxide. Catalyzes gamma-carboxylation of various proteins, such as blood coagulation factors (F2, F7, F9 and F10), osteocalcin (BGLAP) or matrix Gla protein (MGP). The sequence is that of Vitamin K-dependent gamma-carboxylase (GGCX) from Pongo abelii (Sumatran orangutan).